A 393-amino-acid polypeptide reads, in one-letter code: Enoyl-[acyl-carrier-protein] reductase [NADH] (393 aa).

Residues 48 to 53, 74 to 75, 111 to 112, and 139 to 140 each bind NAD(+); these read GSSTGY, FE, DA, and LA. Tyr-225 is a substrate binding site. Tyr-235 (proton donor) is an active-site residue. NAD(+) contacts are provided by residues Lys-244 and 273–275; that span reads LVT.

This sequence belongs to the TER reductase family. As to quaternary structure, monomer.

The catalysed reaction is a 2,3-saturated acyl-[ACP] + NAD(+) = a (2E)-enoyl-[ACP] + NADH + H(+). The protein operates within lipid metabolism; fatty acid biosynthesis. Functionally, involved in the final reduction of the elongation cycle of fatty acid synthesis (FAS II). Catalyzes the reduction of a carbon-carbon double bond in an enoyl moiety that is covalently linked to an acyl carrier protein (ACP). The sequence is that of Enoyl-[acyl-carrier-protein] reductase [NADH] from Pseudoalteromonas atlantica (strain T6c / ATCC BAA-1087).